Consider the following 338-residue polypeptide: Malate dehydrogenase, mitochondrial (338 aa).

The transit peptide at 1-24 directs the protein to the mitochondrion; that stretch reads MLSALARPASAALRRSFSTSAQNN. Residues 31–37 and aspartate 57 each bind NAD(+); that span reads GASGGIG. O-linked (GlcNAc) serine glycosylation is present at serine 33. Lysine 78 and lysine 91 each carry N6-acetyllysine; alternate. Residues lysine 78 and lysine 91 each carry the N6-succinyllysine; alternate modification. The substrate site is built by arginine 104 and arginine 110. NAD(+)-binding positions include asparagine 117 and 140–142; that span reads IAN. Asparagine 142 is a substrate binding site. Lysine 165 is subject to N6-acetyllysine. Residue arginine 176 coordinates substrate. Lysine 185 carries the N6-acetyllysine; alternate modification. Lysine 185 carries the post-translational modification N6-succinyllysine; alternate. The Proton acceptor role is filled by histidine 200. Position 203 is an N6-succinyllysine (lysine 203). An N6-acetyllysine; alternate mark is found at lysine 215 and lysine 239. An N6-succinyllysine; alternate mark is found at lysine 215 and lysine 239. The residue at position 239 (lysine 239) is an N6-malonyllysine; alternate. The residue at position 246 (serine 246) is a Phosphoserine. Methionine 251 serves as a coordination point for NAD(+). At lysine 269 the chain carries N6-succinyllysine. An N6-acetyllysine; alternate mark is found at lysine 296, lysine 301, lysine 307, lysine 314, and lysine 324. An N6-succinyllysine; alternate mark is found at lysine 296, lysine 301, lysine 307, lysine 314, and lysine 324. Lysine 307 bears the N6-malonyllysine; alternate mark. Position 326 is a phosphoserine (serine 326). An N6-acetyllysine; alternate mark is found at lysine 328, lysine 329, and lysine 335. Lysine 328 is subject to N6-succinyllysine; alternate. N6-malonyllysine; alternate is present on lysine 329. Lysine 335 carries the N6-succinyllysine; alternate modification.

Belongs to the LDH/MDH superfamily. MDH type 1 family. As to quaternary structure, homodimer. Acetylation is enhanced by up to 67% after treatment either with trichostin A (TSA) or with nicotinamide (NAM) with the appearance of tri- and tetraacetylations. Glucose also increases acetylation by about 60%.

It is found in the mitochondrion matrix. The catalysed reaction is (S)-malate + NAD(+) = oxaloacetate + NADH + H(+). With respect to regulation, enzyme activity is enhanced by acetylation. The chain is Malate dehydrogenase, mitochondrial (MDH2) from Homo sapiens (Human).